Here is a 411-residue protein sequence, read N- to C-terminus: MYKGETLFSIPELYPRRKQFVGQSSTRLDQCGLRLGMWYWKDETKSLEFRSFTPAVELKEKGKKGKAVHFAEMDGTASERLTDKRFVPRDEKSAKTLEKRGQQGNVTLDDVKFVALLSLQDTEMQRVCSFTTFMRNKSLDSFLMALLYYLSYYLERLSMEKKPQSYMVGLVEKKEIELVMSKLEDAQKYLAQKYCKLVLGVGMADKHHMNCGKDKISDTQKDWKFFESFYTFCTCIAWIVFRRQYLKEIEEEVGRLFRTNMFNIPRRKREDEESGGEKKRMTLVQFRRMMAKRPAIKKAMDMRSPVLSTLLPSLREKAQHIAEKKYVAGIKLQPRVEKDITNLESVVMPVVGILGEPRNLFNPHTLLPLESEENGKTSGRNSSIVERNNTSIQNTLNLVMSKLTSQNSFPK.

In terms of assembly, interacts with PPP1CA.

Functionally, inhibits phosphatase activity of protein phosphatase 1 (PP1) complexes. The chain is Protein phosphatase 1 regulatory subunit 36 (Ppp1r36) from Rattus norvegicus (Rat).